Reading from the N-terminus, the 182-residue chain is Late embryogenesis abundant protein 3 (182 aa).

The segment at 1 to 51 (MAQHQHSPQRPRDQDNTRPHDQYGIVFSVSGDDVARKQGDSFSQPDPTVAT) is disordered. The short motif at 7–11 (SPQRP) is the Nuclear localization signal (NLS) element. Positions 10 to 21 (RPRDQDNTRPHD) are enriched in basic and acidic residues. SMP domains lie at 58 to 115 (VTIG…TNEQ) and 123 to 181 (VNIA…LNQQ). A disordered region spans residues 145 to 182 (EDAEAVVGAELRSSSEMKTTPGGVADSMSAGARLNQQL).

The protein belongs to the LEA type SMP family.

The protein localises to the cytoplasm. The protein resides in the nucleus. Its function is as follows. LEA proteins are late embryonic proteins abundant in higher plant seed embryos. The function of those proteins is not known. In Arabidopsis thaliana (Mouse-ear cress), this protein is Late embryogenesis abundant protein 3.